Consider the following 433-residue polypeptide: Dihydroorotase (433 aa).

Zn(2+) contacts are provided by His63 and His65. Residues 65–67 (HLR) and Asn97 contribute to the substrate site. Zn(2+) is bound by residues Asp155, His182, and His235. Asn283 is a binding site for substrate. Asp310 provides a ligand contact to Zn(2+). The active site involves Asp310. His314 is a binding site for substrate.

Belongs to the metallo-dependent hydrolases superfamily. DHOase family. Class I DHOase subfamily. It depends on Zn(2+) as a cofactor.

It carries out the reaction (S)-dihydroorotate + H2O = N-carbamoyl-L-aspartate + H(+). It participates in pyrimidine metabolism; UMP biosynthesis via de novo pathway; (S)-dihydroorotate from bicarbonate: step 3/3. Its function is as follows. Catalyzes the reversible cyclization of carbamoyl aspartate to dihydroorotate. This chain is Dihydroorotase, found in Anaeromyxobacter dehalogenans (strain 2CP-1 / ATCC BAA-258).